Here is a 364-residue protein sequence, read N- to C-terminus: Aminomethyltransferase (364 aa).

This sequence belongs to the GcvT family. The glycine cleavage system is composed of four proteins: P, T, L and H.

The enzyme catalyses N(6)-[(R)-S(8)-aminomethyldihydrolipoyl]-L-lysyl-[protein] + (6S)-5,6,7,8-tetrahydrofolate = N(6)-[(R)-dihydrolipoyl]-L-lysyl-[protein] + (6R)-5,10-methylene-5,6,7,8-tetrahydrofolate + NH4(+). In terms of biological role, the glycine cleavage system catalyzes the degradation of glycine. In Salmonella dublin (strain CT_02021853), this protein is Aminomethyltransferase.